Reading from the N-terminus, the 512-residue chain is Gamma-aminobutyric acid receptor subunit beta-2 (512 aa).

An N-terminal signal peptide occupies residues 1–25; sequence MWRVRKRGYFGIWSFPLIIAAVCAQ. Residues 26-241 are Extracellular-facing; it reads SVNDPSNMSL…LSLSFKLKRN (216 aa). Residues Asn32 and Asn104 are each glycosylated (N-linked (GlcNAc...) asparagine). Tyr121 serves as a coordination point for histamine. A disulfide bond links Cys160 and Cys174. The N-linked (GlcNAc...) asparagine glycan is linked to Asn173. Residues 180 to 181 and Thr226 each bind histamine; that span reads SY. 2 residues coordinate 4-aminobutanoate: Tyr181 and Thr226. Residues 242-262 form a helical membrane-spanning segment; that stretch reads IGYFILQTYMPSILITILSWV. The Cytoplasmic segment spans residues 263 to 272; that stretch reads SFWINYDASA. A helical transmembrane segment spans residues 273 to 292; that stretch reads ARVALGITTVLTMTTINTHL. Residues 293–310 are Extracellular-facing; the sequence is RETLPKIPYVKAIDMYLM. The chain crosses the membrane as a helical span at residues 311-331; the sequence is GCFVFVFMALLEYALVNYIFF. At 332 to 490 the chain is on the cytoplasmic side; the sequence is GRGPQRQKKA…LTDVNAIDRW (159 aa). The residue at position 441 (Tyr441) is a Phosphotyrosine. A helical membrane pass occupies residues 491-511; the sequence is SRIFFPVVFSFFNIVYWLYYV. A topological domain (extracellular) is located at residue Asn512.

Belongs to the ligand-gated ion channel (TC 1.A.9) family. Gamma-aminobutyric acid receptor (TC 1.A.9.5) subfamily. GABRB2 sub-subfamily. In terms of assembly, heteropentamer, formed by a combination of alpha (GABRA1-6), beta (GABRB1-3), gamma (GABRG1-3), delta (GABRD), epsilon (GABRE), rho (GABRR1-3), pi (GABRP) and theta (GABRQ) chains, each subunit exhibiting distinct physiological and pharmacological properties. Interacts with UBQLN1. May interact with KIF21B. Identified in a complex of 720 kDa composed of LHFPL4, NLGN2, GABRA1, GABRB2, GABRG2 and GABRB3. As to expression, isoform 1 and isoform 2 show reduced expression in schizophrenic brain. Isoform 3 shows increased expression in schizophrenic and bipolar disorder brains while isoform 4 shows reduced expression.

The protein localises to the postsynaptic cell membrane. It is found in the cell membrane. Its subcellular location is the cytoplasmic vesicle membrane. It carries out the reaction chloride(in) = chloride(out). Allosterically activated by benzodiazepines. Allosterically activated by the anesthetic etomidate. Inhibited by the antagonist bicuculline. Potentiated by histamine. Functionally, beta subunit of the heteropentameric ligand-gated chloride channel gated by gamma-aminobutyric acid (GABA), a major inhibitory neurotransmitter in the brain. GABA-gated chloride channels, also named GABA(A) receptors (GABAAR), consist of five subunits arranged around a central pore and contain GABA active binding site(s) located at the alpha and beta subunit interface(s). When activated by GABA, GABAARs selectively allow the flow of chloride anions across the cell membrane down their electrochemical gradient. Chloride influx into the postsynaptic neuron following GABAAR opening decreases the neuron ability to generate a new action potential, thereby reducing nerve transmission. GABAARs containing alpha-1 and beta-2 or -3 subunits exhibit synaptogenic activity; the gamma-2 subunit being necessary but not sufficient to induce rapid synaptic contacts formation. Extrasynaptic beta-2 receptors contribute to the tonic GABAergic inhibition. Beta-containing GABAARs can simultaneously bind GABA and histamine where histamine binds at the interface of two neighboring beta subunits, which may be involved in the regulation of sleep and wakefulness. This Homo sapiens (Human) protein is Gamma-aminobutyric acid receptor subunit beta-2.